Consider the following 73-residue polypeptide: uncharacterized protein (73 aa).

Helical transmembrane passes span Ile10 to Ala30 and Tyr42 to Ile62.

It is found in the cell membrane. This is an uncharacterized protein from Archaeoglobus fulgidus (strain ATCC 49558 / DSM 4304 / JCM 9628 / NBRC 100126 / VC-16).